The sequence spans 512 residues: GMP synthase [glutamine-hydrolyzing] (512 aa).

The 191-residue stretch at 7 to 197 (TIIVLDFGSQ…VFGVCGCSEG (191 aa)) folds into the Glutamine amidotransferase type-1 domain. Cysteine 84 acts as the Nucleophile in catalysis. Catalysis depends on residues histidine 171 and glutamate 173. The region spanning 198–387 (WNMENFIEVE…LGIPDEIVWR (190 aa)) is the GMPS ATP-PPase domain. Position 225-231 (225-231 (SGGVDSS)) interacts with ATP.

As to quaternary structure, homodimer.

It catalyses the reaction XMP + L-glutamine + ATP + H2O = GMP + L-glutamate + AMP + diphosphate + 2 H(+). Its pathway is purine metabolism; GMP biosynthesis; GMP from XMP (L-Gln route): step 1/1. Functionally, catalyzes the synthesis of GMP from XMP. This Bacillus cytotoxicus (strain DSM 22905 / CIP 110041 / 391-98 / NVH 391-98) protein is GMP synthase [glutamine-hydrolyzing].